The primary structure comprises 287 residues: Inorganic pyrophosphatase (287 aa).

Arginine 79 is a diphosphate binding site. Residues aspartate 116, aspartate 121, and aspartate 153 each coordinate Mg(2+).

The protein belongs to the PPase family. It depends on Mg(2+) as a cofactor.

The protein resides in the cytoplasm. The catalysed reaction is diphosphate + H2O = 2 phosphate + H(+). In Debaryomyces hansenii (strain ATCC 36239 / CBS 767 / BCRC 21394 / JCM 1990 / NBRC 0083 / IGC 2968) (Yeast), this protein is Inorganic pyrophosphatase (IPP1).